Here is a 336-residue protein sequence, read N- to C-terminus: D-alanine--D-alanine ligase (336 aa).

Positions 124–330 (KMWFSALGIP…FATFLEQAIL (207 aa)) constitute an ATP-grasp domain. Residue 154–209 (AFDEWGSVFIKAASQGSSVGCFPAHRREDIPGLVRKAFEYAPFVVVEKTIKARELE) coordinates ATP. 3 residues coordinate Mg(2+): D284, E297, and N299.

Belongs to the D-alanine--D-alanine ligase family. Mg(2+) is required as a cofactor. The cofactor is Mn(2+).

It localises to the cytoplasm. The enzyme catalyses 2 D-alanine + ATP = D-alanyl-D-alanine + ADP + phosphate + H(+). Its pathway is cell wall biogenesis; peptidoglycan biosynthesis. Functionally, cell wall formation. The sequence is that of D-alanine--D-alanine ligase from Shewanella amazonensis (strain ATCC BAA-1098 / SB2B).